Consider the following 155-residue polypeptide: MVQCTDCKKWRLIPSMQHYNIIKETQLQTPFVCGTTSGWTPNMSCNVPQDGTTCDTWPSIPPIPTGWSRSVHIRSESTKFADVYYFPPSGERLRSSAEVQSFLDNHPEYVREGVNRSQFSFQIPKPLDDNYVKKRTRPVKRRKSSKDNNCEKGKK.

Residues 1–53 form a CW-type zinc finger; it reads MVQCTDCKKWRLIPSMQHYNIIKETQLQTPFVCGTTSGWTPNMSCNVPQDGTT. Residues 3 to 45 carry the MBD-associated domain (MAD) motif; it reads QCTDCKKWRLIPSMQHYNIIKETQLQTPFVCGTTSGWTPNMSC. 4 residues coordinate Zn(2+): C4, C7, C33, and C45. In terms of domain architecture, MBD spans 53-126; sequence TCDTWPSIPP…SQFSFQIPKP (74 aa). The segment at 130-155 is disordered; it reads NYVKKRTRPVKRRKSSKDNNCEKGKK. Positions 133–144 are enriched in basic residues; it reads KKRTRPVKRRKS. A Nuclear localization signal motif is present at residues 140-147; the sequence is KRRKSSKD. Residues 145–155 are compositionally biased toward basic and acidic residues; it reads SKDNNCEKGKK.

Its subcellular location is the nucleus. In terms of biological role, probable transcriptional regulator. This chain is Putative methyl-CpG-binding domain protein 12 (MBD12), found in Arabidopsis thaliana (Mouse-ear cress).